The sequence spans 242 residues: ATP-dependent dethiobiotin synthetase BioD (242 aa).

12–17 (SVGKTI) contributes to the ATP binding site. Mg(2+) is bound at residue Thr-16. The active site involves Lys-37. Asp-66 contributes to the ATP binding site. Residues Asp-66 and Glu-124 each contribute to the Mg(2+) site. 184 to 185 (NR) contributes to the ATP binding site.

Belongs to the dethiobiotin synthetase family. As to quaternary structure, homodimer. The cofactor is Mg(2+).

It is found in the cytoplasm. The enzyme catalyses (7R,8S)-7,8-diammoniononanoate + CO2 + ATP = (4R,5S)-dethiobiotin + ADP + phosphate + 3 H(+). It functions in the pathway cofactor biosynthesis; biotin biosynthesis; biotin from 7,8-diaminononanoate: step 1/2. Functionally, catalyzes a mechanistically unusual reaction, the ATP-dependent insertion of CO2 between the N7 and N8 nitrogen atoms of 7,8-diaminopelargonic acid (DAPA, also called 7,8-diammoniononanoate) to form a ureido ring. In Mannheimia succiniciproducens (strain KCTC 0769BP / MBEL55E), this protein is ATP-dependent dethiobiotin synthetase BioD.